The sequence spans 103 residues: Large ribosomal subunit protein bL21 (103 aa).

It belongs to the bacterial ribosomal protein bL21 family. Part of the 50S ribosomal subunit. Contacts protein L20.

Functionally, this protein binds to 23S rRNA in the presence of protein L20. The sequence is that of Large ribosomal subunit protein bL21 from Clostridium kluyveri (strain NBRC 12016).